We begin with the raw amino-acid sequence, 80 residues long: Small ribosomal subunit protein bS18 (80 aa).

The protein belongs to the bacterial ribosomal protein bS18 family. Part of the 30S ribosomal subunit. Forms a tight heterodimer with protein bS6.

In terms of biological role, binds as a heterodimer with protein bS6 to the central domain of the 16S rRNA, where it helps stabilize the platform of the 30S subunit. The sequence is that of Small ribosomal subunit protein bS18 from Staphylococcus saprophyticus subsp. saprophyticus (strain ATCC 15305 / DSM 20229 / NCIMB 8711 / NCTC 7292 / S-41).